The sequence spans 116 residues: MNLTEQRCTACRPDAPRVGAAEIAELHPQIPAWRIVEIEGTPRLERQFRLRDFREAIAFTVRVGEEAEAEGHHPALLTEWGSVKVSWWTHAIAGLHRNDFVMAAKTDAIAAQVGAV.

Belongs to the pterin-4-alpha-carbinolamine dehydratase family.

The enzyme catalyses (4aS,6R)-4a-hydroxy-L-erythro-5,6,7,8-tetrahydrobiopterin = (6R)-L-erythro-6,7-dihydrobiopterin + H2O. The sequence is that of Putative pterin-4-alpha-carbinolamine dehydratase 1 from Gloeobacter violaceus (strain ATCC 29082 / PCC 7421).